The primary structure comprises 570 residues: MRVSKYLLSTQKETPANAEVISHQLMLRAGMIRRNASGLYSYLPSGLRVLRKVEAIVREEMNKAGAIEILMPMVQPADLWVETGRWDKFGPELLRFKDRHNRDFVLGPTHEEVITDLIRKEVSSYKQLPLNLYQIQTKFRDEVRPRFGVMRSREFLMKDAYSFHLDMDTLNETYEAMYQAYSNILSRMGLAFRPVLADTGSIGGSMSHEFHVLAQSGEDLIAYSTGSDYAANIEKAESPMPTETRGAATKELRLVDTPNAKTIAELVEQFGLDITKTVKTLIVKGATEEAPLVALIVRGDHELNEIKADKLDLVASPLEFAPEALIRDAIGAGPGSLGPVGLNMPIIIDHSVSVMSDFAAGANVDDKHYFGINWERDLPLAQAADIRNVVEGEPTPDGLGTYAMARGIEVGHIFQLGTNYSKSMNATVLDENGKSQVLLMGCYGVGVSRIVAAAIEQNFDDRGIVWPEAIAPFSVGILPMNMHKSHRVTDIAEQLYKDLSAAGIDVLLDDRKERPGVMFADMELIGIPHTVVIGDRNIDAGVFEYKNRRTGEKQDVPFDQIVDFLKNLQA.

This sequence belongs to the class-II aminoacyl-tRNA synthetase family. ProS type 1 subfamily. In terms of assembly, homodimer.

Its subcellular location is the cytoplasm. The catalysed reaction is tRNA(Pro) + L-proline + ATP = L-prolyl-tRNA(Pro) + AMP + diphosphate. In terms of biological role, catalyzes the attachment of proline to tRNA(Pro) in a two-step reaction: proline is first activated by ATP to form Pro-AMP and then transferred to the acceptor end of tRNA(Pro). As ProRS can inadvertently accommodate and process non-cognate amino acids such as alanine and cysteine, to avoid such errors it has two additional distinct editing activities against alanine. One activity is designated as 'pretransfer' editing and involves the tRNA(Pro)-independent hydrolysis of activated Ala-AMP. The other activity is designated 'posttransfer' editing and involves deacylation of mischarged Ala-tRNA(Pro). The misacylated Cys-tRNA(Pro) is not edited by ProRS. The sequence is that of Proline--tRNA ligase from Shewanella oneidensis (strain ATCC 700550 / JCM 31522 / CIP 106686 / LMG 19005 / NCIMB 14063 / MR-1).